A 362-amino-acid polypeptide reads, in one-letter code: Probable S-adenosylmethionine-dependent methyltransferase At5g37990 (362 aa).

S-adenosyl-L-homocysteine is bound by residues Y19, C66, N71, D107, S136, and F137. Mg(2+) contacts are provided by N175, E261, and F263.

The protein belongs to the methyltransferase superfamily. Type-7 methyltransferase family. In terms of assembly, homodimer. Mg(2+) is required as a cofactor.

The sequence is that of Probable S-adenosylmethionine-dependent methyltransferase At5g37990 from Arabidopsis thaliana (Mouse-ear cress).